A 331-amino-acid polypeptide reads, in one-letter code: 6-phosphogluconolactonase (331 aa).

Belongs to the cycloisomerase 2 family.

It carries out the reaction 6-phospho-D-glucono-1,5-lactone + H2O = 6-phospho-D-gluconate + H(+). The protein operates within carbohydrate degradation; pentose phosphate pathway; D-ribulose 5-phosphate from D-glucose 6-phosphate (oxidative stage): step 2/3. Functionally, catalyzes the hydrolysis of 6-phosphogluconolactone to 6-phosphogluconate. The chain is 6-phosphogluconolactonase from Klebsiella pneumoniae (strain 342).